Consider the following 500-residue polypeptide: MNDFPWLTIIVVFPISAGSLMLFLPHRGNKVNKWYTICICILELLLTTYAFCYNFKMDDPLIQLSEDYKWINFLDFYWRMGIDGLSIGTILLTGFITTLATLAAFPVTRDSKLFHFLMLAMYSGQIGSFSSRDLLLFFIMWELELIPVYLLLSMWGGKKRLYSATKFILYTAGSSIFLLIGVLGISLYGSNEPTLNLELLANQSYPVTLEILFYIGFLIAFAVKSPIIPLHTWLPDTHGEAHYSTCMLLAGILLKMGAYGLVRINMELLPHAHSMFSPWLMVVGTIQIIYAASTSPGQRNLKKRIAYSSVSHMGFIIIGISSITDPGLNGAILQIISHGFIGAALFFLAGTSYDRIRLVYLDEMGGMAISIPKIFTMFTILSMASLALPGMSGFVAELIVFFGIITSQKYFLISKILIIFVMAIGMILTPIYLLSMSRQMFYGYKLINVKNFSFFDSGPRELFLSISILLPIIGIGIYPDFVLSLASDKVESILSNYFYG.

Transmembrane regions (helical) follow at residues 4-24 (FPWL…MLFL), 35-55 (YTIC…CYNF), 87-107 (IGTI…AFPV), 113-130 (LFHF…GSFS), 134-154 (LLLF…LLSM), 167-187 (FILY…GISL), 211-231 (ILFY…IPLH), 242-262 (HYST…YGLV), 272-292 (AHSM…IYAA), 305-325 (IAYS…SITD), 330-350 (GAIL…FLAG), 386-406 (LALP…GIIT), 416-436 (ILII…LLSM), and 462-482 (LFLS…PDFV).

The protein belongs to the complex I subunit 4 family.

The protein localises to the plastid. Its subcellular location is the chloroplast thylakoid membrane. The catalysed reaction is a plastoquinone + NADH + (n+1) H(+)(in) = a plastoquinol + NAD(+) + n H(+)(out). The enzyme catalyses a plastoquinone + NADPH + (n+1) H(+)(in) = a plastoquinol + NADP(+) + n H(+)(out). This is NAD(P)H-quinone oxidoreductase chain 4, chloroplastic from Nasturtium officinale (Watercress).